Consider the following 183-residue polypeptide: Large ribosomal subunit protein uL6 (183 aa).

Belongs to the universal ribosomal protein uL6 family. Part of the 50S ribosomal subunit.

Its function is as follows. This protein binds to the 23S rRNA, and is important in its secondary structure. It is located near the subunit interface in the base of the L7/L12 stalk, and near the tRNA binding site of the peptidyltransferase center. The protein is Large ribosomal subunit protein uL6 of Chlamydia trachomatis serovar A (strain ATCC VR-571B / DSM 19440 / HAR-13).